Reading from the N-terminus, the 232-residue chain is Sugar fermentation stimulation protein homolog (232 aa).

It belongs to the SfsA family.

The chain is Sugar fermentation stimulation protein homolog from Shouchella clausii (strain KSM-K16) (Alkalihalobacillus clausii).